We begin with the raw amino-acid sequence, 131 residues long: Small ribosomal subunit protein uS8 (131 aa).

This sequence belongs to the universal ribosomal protein uS8 family. As to quaternary structure, part of the 30S ribosomal subunit. Contacts proteins S5 and S12.

Its function is as follows. One of the primary rRNA binding proteins, it binds directly to 16S rRNA central domain where it helps coordinate assembly of the platform of the 30S subunit. The polypeptide is Small ribosomal subunit protein uS8 (Shewanella amazonensis (strain ATCC BAA-1098 / SB2B)).